Here is a 502-residue protein sequence, read N- to C-terminus: uncharacterized protein (502 aa).

Residues 1 to 21 form a helical membrane-spanning segment; the sequence is MKIFLVFLSVFFFNGCFGLVY. PLD phosphodiesterase domains are found at residues 162–189 and 396–423; these read IKKR…GDNY and TKHS…DPRS.

The protein belongs to the phospholipase D family. Cardiolipin synthase subfamily.

It localises to the cell membrane. This is an uncharacterized protein from Helicobacter pylori (strain ATCC 700392 / 26695) (Campylobacter pylori).